A 497-amino-acid chain; its full sequence is Paired box protein Pax-2-A (497 aa).

The segment at residues 16 to 142 is a DNA-binding region (paired); sequence GHGGVNQLGG…SSINRIIRTK (127 aa). Positions 19–75 are PAI subdomain; it reads GVNQLGGVFVNGRPLPDVVRQRIVELAHQGVRPCDISRQLRVSHGCVSKILGRYYET. An RED subdomain region spans residues 94–142; the sequence is KVVDKIAEYKRQNPTMFAWEIRDRLLAEGICDNDTVPSVSSINRIIRTK. Residues 143 to 224 form a disordered region; that stretch reads VQQPFHPTPD…GDSQSSVESL (82 aa). Low complexity predominate over residues 166–178; sequence VPSTASPPVSSAS.

In terms of tissue distribution, expression becomes spatially localized at mid-gastrula stages and is confined to the nervous system (midbrain, hindbrain, spinal cord), sensory organs (optic vesicle and stalk, otic vesicle), visceral arches, developing excretory system (pronephros, pronephric duct, rectal diverticulum, proctodaeum) and thyroid gland. Splicing does not appear to be tissue-specific and tissues displayed the same spectrum of splice variants.

Its subcellular location is the nucleus. Its function is as follows. Probable transcription factor. Involved in kidney development, acting synergistically with lhx1/lim-1 in pronephric morphogenesis during the tailbud stages. The sequence is that of Paired box protein Pax-2-A (pax2-a) from Xenopus laevis (African clawed frog).